The chain runs to 426 residues: Histidine--tRNA ligase (426 aa).

It belongs to the class-II aminoacyl-tRNA synthetase family.

Its subcellular location is the cytoplasm. It catalyses the reaction tRNA(His) + L-histidine + ATP = L-histidyl-tRNA(His) + AMP + diphosphate + H(+). The chain is Histidine--tRNA ligase from Saccharolobus islandicus (strain L.S.2.15 / Lassen #1) (Sulfolobus islandicus).